The primary structure comprises 146 residues: Hemoglobin subunit beta (146 aa).

Valine 1 carries the N-acetylvaline modification. In terms of domain architecture, Globin spans 2 to 146; it reads HLTAEEKSLV…VANALAHKYH (145 aa). Position 44 is a phosphoserine (serine 44). Residue lysine 59 is modified to N6-acetyllysine. Histidine 63 serves as a coordination point for heme b. Lysine 82 is modified (N6-acetyllysine). Residue histidine 92 participates in heme b binding. Cysteine 93 is modified (S-nitrosocysteine). Lysine 144 is modified (N6-acetyllysine).

This sequence belongs to the globin family. In terms of assembly, heterotetramer of two alpha chains and two beta chains. Red blood cells.

Functionally, involved in oxygen transport from the lung to the various peripheral tissues. The polypeptide is Hemoglobin subunit beta (HBB) (Canis latrans (Coyote)).